The sequence spans 473 residues: Serine palmitoyltransferase 1 (473 aa).

Residues 1–15 are Lumenal-facing; the sequence is MATATEQWVLVEMVQ. The tract at residues 1–66 is interaction with SPTLC2; sequence MATATEQWVL…KEELIEEWQP (66 aa). A helical membrane pass occupies residues 16–36; the sequence is ALYEAPAYHLILEGILILWII. Residues 37-473 are Cytoplasmic-facing; it reads RLLFSKTYKL…IKEVAQAVLL (437 aa). Tyr164 bears the Phosphotyrosine; by ABL mark.

It belongs to the class-II pyridoxal-phosphate-dependent aminotransferase family. As to quaternary structure, component of the serine palmitoyltransferase (SPT) complex, which is also composed of SPTLC2 or SPTLC3 and SPTSSA or SPTSSB. The heterodimer with SPTLC2 or SPTLC3 forms the catalytic core of the enzyme, while SPTSSA or SPTSSB subunits determine substrate specificity. SPT also interacts with ORMDL proteins, especially ORMDL3, which negatively regulate SPT activity in the presence of ceramides. Forms dimers of heterodimers with SPTLC2. Interacts with RTN4. It depends on pyridoxal 5'-phosphate as a cofactor. Post-translationally, phosphorylation at Tyr-164 inhibits activity and promotes cell survival.

The protein resides in the endoplasmic reticulum membrane. The catalysed reaction is L-serine + hexadecanoyl-CoA + H(+) = 3-oxosphinganine + CO2 + CoA. The enzyme catalyses octadecanoyl-CoA + L-serine + H(+) = 3-oxoeicosasphinganine + CO2 + CoA. It catalyses the reaction tetradecanoyl-CoA + L-serine + H(+) = 3-oxohexadecasphinganine + CO2 + CoA. It carries out the reaction dodecanoyl-CoA + L-serine + H(+) = 3-oxotetradecasphinganine + CO2 + CoA. Its pathway is lipid metabolism; sphingolipid metabolism. Its activity is regulated as follows. SPT complex catalytic activity is negatively regulated by ORMDL proteins, including ORMDL3, in the presence of ceramides. This mechanism allows to maintain ceramide levels at sufficient concentrations for the production of complex sphingolipids, but which prevents the accumulation of ceramides to levels that trigger apoptosis. In terms of biological role, component of the serine palmitoyltransferase multisubunit enzyme (SPT) that catalyzes the initial and rate-limiting step in sphingolipid biosynthesis by condensing L-serine and activated acyl-CoA (most commonly palmitoyl-CoA) to form long-chain bases. The SPT complex is also composed of SPTLC2 or SPTLC3 and SPTSSA or SPTSSB. Within this complex, the heterodimer with SPTLC2 or SPTLC3 forms the catalytic core. The composition of the serine palmitoyltransferase (SPT) complex determines the substrate preference. The SPTLC1-SPTLC2-SPTSSA complex shows a strong preference for C16-CoA substrate, while the SPTLC1-SPTLC3-SPTSSA isozyme uses both C14-CoA and C16-CoA as substrates, with a slight preference for C14-CoA. The SPTLC1-SPTLC2-SPTSSB complex shows a strong preference for C18-CoA substrate, while the SPTLC1-SPTLC3-SPTSSB isozyme displays an ability to use a broader range of acyl-CoAs, without apparent preference. Required for adipocyte cell viability and metabolic homeostasis. This chain is Serine palmitoyltransferase 1 (SPTLC1), found in Macaca fascicularis (Crab-eating macaque).